Reading from the N-terminus, the 365-residue chain is tRNA-specific 2-thiouridylase MnmA (365 aa).

Residues 6–13 (AMSGGVDS) and Met32 each bind ATP. The Nucleophile role is filled by Cys101. Cysteines 101 and 199 form a disulfide. Gly125 provides a ligand contact to ATP. Residues 148–150 (KDQ) are interaction with tRNA. Residue Cys199 is the Cysteine persulfide intermediate of the active site.

The protein belongs to the MnmA/TRMU family.

Its subcellular location is the cytoplasm. The enzyme catalyses S-sulfanyl-L-cysteinyl-[protein] + uridine(34) in tRNA + AH2 + ATP = 2-thiouridine(34) in tRNA + L-cysteinyl-[protein] + A + AMP + diphosphate + H(+). Catalyzes the 2-thiolation of uridine at the wobble position (U34) of tRNA, leading to the formation of s(2)U34. In Kineococcus radiotolerans (strain ATCC BAA-149 / DSM 14245 / SRS30216), this protein is tRNA-specific 2-thiouridylase MnmA.